Reading from the N-terminus, the 657-residue chain is Glycogen debranching enzyme (657 aa).

The active-site Nucleophile is the Asp336. Glu371 serves as the catalytic Proton donor. The segment at 460–479 is disordered; that stretch reads ANGEENRDGTNNNYSNNHGK.

The protein belongs to the glycosyl hydrolase 13 family.

The enzyme catalyses Hydrolysis of (1-&gt;6)-alpha-D-glucosidic linkages to branches with degrees of polymerization of three or four glucose residues in limit dextrin.. It functions in the pathway glycan degradation; glycogen degradation. Its function is as follows. Removes maltotriose and maltotetraose chains that are attached by 1,6-alpha-linkage to the limit dextrin main chain, generating a debranched limit dextrin. This chain is Glycogen debranching enzyme, found in Escherichia coli (strain UTI89 / UPEC).